We begin with the raw amino-acid sequence, 344 residues long: Fructose-bisphosphate aldolase (344 aa).

Residue serine 53 coordinates D-glyceraldehyde 3-phosphate. The active-site Proton donor is aspartate 95. Zn(2+)-binding residues include histidine 96, aspartate 131, glutamate 161, and histidine 212. Glycine 213 is a binding site for dihydroxyacetone phosphate. A Zn(2+)-binding site is contributed by histidine 252. Dihydroxyacetone phosphate contacts are provided by residues 253–255 (GGS) and 274–277 (NVDT).

It belongs to the class II fructose-bisphosphate aldolase family. Requires Zn(2+) as cofactor.

The enzyme catalyses beta-D-fructose 1,6-bisphosphate = D-glyceraldehyde 3-phosphate + dihydroxyacetone phosphate. It participates in carbohydrate degradation; glycolysis; D-glyceraldehyde 3-phosphate and glycerone phosphate from D-glucose: step 4/4. In terms of biological role, catalyzes the aldol condensation of dihydroxyacetone phosphate (DHAP or glycerone-phosphate) with glyceraldehyde 3-phosphate (G3P) to form fructose 1,6-bisphosphate (FBP) in gluconeogenesis and the reverse reaction in glycolysis. The polypeptide is Fructose-bisphosphate aldolase (fba) (Corynebacterium glutamicum (strain ATCC 13032 / DSM 20300 / JCM 1318 / BCRC 11384 / CCUG 27702 / LMG 3730 / NBRC 12168 / NCIMB 10025 / NRRL B-2784 / 534)).